A 402-amino-acid polypeptide reads, in one-letter code: Propionate kinase (402 aa).

Residues Asn11 and Lys18 each coordinate ATP. Asn11 contributes to the Mg(2+) binding site. Residue Arg86 participates in substrate binding. Residue Asp143 is the Proton donor/acceptor of the active site. Residues His175, 203-207 (HLGNG), 278-280 (DLR), and 326-330 (GIGEN) contribute to the ATP site.

This sequence belongs to the acetokinase family. TdcD subfamily. As to quaternary structure, homodimer. Mg(2+) serves as cofactor.

The catalysed reaction is propanoate + ATP = propanoyl phosphate + ADP. It functions in the pathway amino-acid degradation; L-threonine degradation via propanoate pathway; propanoate from L-threonine: step 4/4. Catalyzes the conversion of propionyl phosphate and ADP to propionate and ATP. The polypeptide is Propionate kinase (Escherichia coli O157:H7).